The primary structure comprises 285 residues: Glutamate racemase (285 aa).

Residues 28–29 and 60–61 contribute to the substrate site; these read DS and YG. Residue cysteine 92 is the Proton donor/acceptor of the active site. Residue 93-94 participates in substrate binding; the sequence is NT. Cysteine 204 functions as the Proton donor/acceptor in the catalytic mechanism. 205–206 is a substrate binding site; sequence TH.

The protein belongs to the aspartate/glutamate racemases family.

The enzyme catalyses L-glutamate = D-glutamate. It functions in the pathway cell wall biogenesis; peptidoglycan biosynthesis. Provides the (R)-glutamate required for cell wall biosynthesis. The chain is Glutamate racemase from Escherichia coli O9:H4 (strain HS).